The following is a 126-amino-acid chain: Protein ApaG (126 aa).

The ApaG domain occupies serine 2–histidine 126.

This chain is Protein ApaG, found in Ectopseudomonas mendocina (strain ymp) (Pseudomonas mendocina).